A 475-amino-acid polypeptide reads, in one-letter code: Lactate utilization protein B (475 aa).

2 consecutive 4Fe-4S ferredoxin-type domains span residues 304 to 334 and 353 to 382; these read GTEF…GHSY and YDDY…LHEL. [4Fe-4S] cluster is bound by residues Cys313, Cys316, Cys319, Cys323, Cys366, Cys369, and Cys373.

Belongs to the LutB/YkgF family.

Functionally, is involved in L-lactate degradation and allows cells to grow with lactate as the sole carbon source. Has probably a role as an electron transporter during oxidation of L-lactate. This chain is Lactate utilization protein B, found in Geobacillus sp. (strain WCH70).